A 437-amino-acid polypeptide reads, in one-letter code: UDP-N-acetylmuramoylalanine--D-glutamate ligase (437 aa).

Residue 112-118 (GSNGKST) coordinates ATP.

It belongs to the MurCDEF family.

The protein localises to the cytoplasm. The catalysed reaction is UDP-N-acetyl-alpha-D-muramoyl-L-alanine + D-glutamate + ATP = UDP-N-acetyl-alpha-D-muramoyl-L-alanyl-D-glutamate + ADP + phosphate + H(+). It participates in cell wall biogenesis; peptidoglycan biosynthesis. Cell wall formation. Catalyzes the addition of glutamate to the nucleotide precursor UDP-N-acetylmuramoyl-L-alanine (UMA). This chain is UDP-N-acetylmuramoylalanine--D-glutamate ligase, found in Haemophilus influenzae (strain PittGG).